A 736-amino-acid polypeptide reads, in one-letter code: Phosphoribosylformylglycinamidine synthase subunit PurL (736 aa).

His-49 is a catalytic residue. Tyr-52 and Lys-91 together coordinate ATP. Mg(2+) is bound at residue Glu-93. Residues 94 to 97 and Arg-116 contribute to the substrate site; that span reads SHNH. Residue His-95 is the Proton acceptor of the active site. A Mg(2+)-binding site is contributed by Asp-117. Gln-240 provides a ligand contact to substrate. Asp-268 is a Mg(2+) binding site. 312-314 serves as a coordination point for substrate; it reads ESQ. The ATP site is built by Asp-493 and Gly-530. Position 531 (Asn-531) interacts with Mg(2+). Ser-533 lines the substrate pocket.

This sequence belongs to the FGAMS family. As to quaternary structure, monomer. Part of the FGAM synthase complex composed of 1 PurL, 1 PurQ and 2 PurS subunits.

It localises to the cytoplasm. It catalyses the reaction N(2)-formyl-N(1)-(5-phospho-beta-D-ribosyl)glycinamide + L-glutamine + ATP + H2O = 2-formamido-N(1)-(5-O-phospho-beta-D-ribosyl)acetamidine + L-glutamate + ADP + phosphate + H(+). Its pathway is purine metabolism; IMP biosynthesis via de novo pathway; 5-amino-1-(5-phospho-D-ribosyl)imidazole from N(2)-formyl-N(1)-(5-phospho-D-ribosyl)glycinamide: step 1/2. Its function is as follows. Part of the phosphoribosylformylglycinamidine synthase complex involved in the purines biosynthetic pathway. Catalyzes the ATP-dependent conversion of formylglycinamide ribonucleotide (FGAR) and glutamine to yield formylglycinamidine ribonucleotide (FGAM) and glutamate. The FGAM synthase complex is composed of three subunits. PurQ produces an ammonia molecule by converting glutamine to glutamate. PurL transfers the ammonia molecule to FGAR to form FGAM in an ATP-dependent manner. PurS interacts with PurQ and PurL and is thought to assist in the transfer of the ammonia molecule from PurQ to PurL. In Rhodopseudomonas palustris (strain ATCC BAA-98 / CGA009), this protein is Phosphoribosylformylglycinamidine synthase subunit PurL.